Here is a 184-residue protein sequence, read N- to C-terminus: Ribosome-recycling factor (184 aa).

It belongs to the RRF family.

The protein localises to the cytoplasm. In terms of biological role, responsible for the release of ribosomes from messenger RNA at the termination of protein biosynthesis. May increase the efficiency of translation by recycling ribosomes from one round of translation to another. This Clostridium botulinum (strain Langeland / NCTC 10281 / Type F) protein is Ribosome-recycling factor.